A 387-amino-acid chain; its full sequence is Phosphoglycerate kinase (387 aa).

Substrate contacts are provided by residues 21 to 23 (DLN), Arg36, 59 to 62 (HLGR), Arg113, and Arg146. ATP is bound by residues Lys197, Glu314, and 340-343 (GGDT).

This sequence belongs to the phosphoglycerate kinase family. As to quaternary structure, monomer.

It localises to the cytoplasm. It carries out the reaction (2R)-3-phosphoglycerate + ATP = (2R)-3-phospho-glyceroyl phosphate + ADP. The protein operates within carbohydrate degradation; glycolysis; pyruvate from D-glyceraldehyde 3-phosphate: step 2/5. The chain is Phosphoglycerate kinase from Pectobacterium carotovorum subsp. carotovorum (strain PC1).